The chain runs to 176 residues: HTH-type transcriptional regulator DctR (176 aa).

Residues 109–174 (VPEAAVSLSR…ELVRHQHIDY (66 aa)) form the HTH luxR-type domain. A DNA-binding region (H-T-H motif) is located at residues 133-152 (TEDILEKLKISLKTFYCHKH).

Functionally, may act as a transcriptional regulator of dctA. The polypeptide is HTH-type transcriptional regulator DctR (dctR) (Escherichia coli (strain K12)).